A 110-amino-acid chain; its full sequence is Integration host factor subunit alpha (110 aa).

This sequence belongs to the bacterial histone-like protein family. As to quaternary structure, heterodimer of an alpha and a beta chain.

Its function is as follows. This protein is one of the two subunits of integration host factor, a specific DNA-binding protein that functions in genetic recombination as well as in transcriptional and translational control. The polypeptide is Integration host factor subunit alpha (Methylococcus capsulatus (strain ATCC 33009 / NCIMB 11132 / Bath)).